The chain runs to 92 residues: Small ribosomal subunit protein uS19c (92 aa).

This sequence belongs to the universal ribosomal protein uS19 family.

The protein localises to the plastid. Its subcellular location is the chloroplast. Functionally, protein S19 forms a complex with S13 that binds strongly to the 16S ribosomal RNA. The chain is Small ribosomal subunit protein uS19c from Chloranthus spicatus (Chulantree).